A 96-amino-acid chain; its full sequence is uncharacterized protein (96 aa).

Positions 1 to 21 (MLASVLILGAIAVGSAIPTIA) are cleaved as a signal peptide.

This is an uncharacterized protein from Archaeoglobus fulgidus (strain ATCC 49558 / DSM 4304 / JCM 9628 / NBRC 100126 / VC-16).